The following is a 777-amino-acid chain: ATPase ARSA1 (777 aa).

110 to 117 (KGGVGKTS) lines the ATP pocket. Asp-139 is a catalytic residue. Residues Asn-372 and 454-461 (KGGVGKTS) contribute to the ATP site. Asp-483 is a catalytic residue. Residue Asn-712 participates in ATP binding.

It belongs to the arsA ATPase family. In terms of assembly, monomer. Interacts with TOC34.

It is found in the cytoplasm. The protein resides in the cytosol. In terms of biological role, ATPase required for the post-translational delivery of tail-anchored (TA) proteins to the chloroplast. Required for the accumulation of TOC34, an essential component of the outer chloroplast membrane translocon (TOC) complex. Recognizes and selectively binds the transmembrane domain of TA proteins in the cytosol. This complex then targets to chloroplast, where the tail-anchored protein is released for insertion. This process is regulated by ATP binding and hydrolysis. The protein is ATPase ARSA1 of Chlamydomonas reinhardtii (Chlamydomonas smithii).